The chain runs to 348 residues: dTDP-glucose 4,6-dehydratase (348 aa).

Residues F15–I16, D37–T40, D62–I63, and Y82–S86 each bind NAD(+). Positions 86 and 88 each coordinate substrate. T101 serves as a coordination point for NAD(+). T125 provides a ligand contact to substrate. Catalysis depends on D126, which acts as the Proton donor. Residues E127 and Y161 each act as proton acceptor in the active site. Residue Y161–K165 participates in NAD(+) binding. Residue N190 participates in substrate binding. N191 contributes to the NAD(+) binding site. Substrate contacts are provided by residues K200–Q205, K216–Y218, R225, N260, and D283–H287.

It belongs to the NAD(P)-dependent epimerase/dehydratase family. dTDP-glucose dehydratase subfamily. In terms of assembly, homodimer. The cofactor is NAD(+).

It catalyses the reaction dTDP-alpha-D-glucose = dTDP-4-dehydro-6-deoxy-alpha-D-glucose + H2O. It functions in the pathway carbohydrate biosynthesis; dTDP-L-rhamnose biosynthesis. Functionally, catalyzes the dehydration of dTDP-D-glucose to form dTDP-6-deoxy-D-xylo-4-hexulose via a three-step process involving oxidation, dehydration and reduction. This is dTDP-glucose 4,6-dehydratase (rmlB) from Streptococcus mutans serotype c (strain ATCC 700610 / UA159).